We begin with the raw amino-acid sequence, 492 residues long: Transmembrane protein 104 homolog (492 aa).

The Cytoplasmic portion of the chain corresponds to Met-1–Val-18. Residues Gly-19–Phe-39 traverse the membrane as a helical segment. At Gln-40–Leu-45 the chain is on the extracellular side. Residues Leu-46–Ile-66 traverse the membrane as a helical segment. At Glu-67–Lys-114 the chain is on the cytoplasmic side. Residues Val-115–Tyr-135 form a helical membrane-spanning segment. The Extracellular segment spans residues Ser-136 to Arg-177. Asn-152 carries N-linked (GlcNAc...) asparagine glycosylation. A helical membrane pass occupies residues Phe-178–Lys-198. Over Thr-199–Arg-210 the chain is Cytoplasmic. A helical membrane pass occupies residues Trp-211–Ala-231. At Ala-232–Asn-238 the chain is on the extracellular side. Residues Phe-239–Ile-259 traverse the membrane as a helical segment. Residues Pro-260–Lys-275 are Cytoplasmic-facing. The helical transmembrane segment at Ile-276–Phe-296 threads the bilayer. Residues Ala-297–Phe-325 are Extracellular-facing. N-linked (GlcNAc...) asparagine glycosylation occurs at Asn-314. Residues Leu-326 to Ile-346 form a helical membrane-spanning segment. Residues Asn-347 to Lys-391 are Cytoplasmic-facing. A compositionally biased stretch (acidic residues) spans Leu-367–Glu-382. The segment at Leu-367–Asn-387 is disordered. Residues Thr-392–Leu-412 traverse the membrane as a helical segment. Topologically, residues Thr-413 to Asp-415 are extracellular. The chain crosses the membrane as a helical span at residues Met-416–Pro-436. Residues Cys-437–Arg-466 are Cytoplasmic-facing. A helical transmembrane segment spans residues Phe-467–Leu-487. Residues Val-488–Phe-492 are Extracellular-facing.

The protein belongs to the TMEM104 family.

The protein localises to the membrane. This Caenorhabditis briggsae protein is Transmembrane protein 104 homolog.